The chain runs to 175 residues: Mitochondrial inner membrane protease subunit 2 (175 aa).

A helical transmembrane segment spans residues 19–37 (FFVAVPVAVTFLDRVACVA). Active-site residues include Ser-43 and Lys-91.

The protein belongs to the peptidase S26 family. IMP2 subfamily. Heterodimer of 2 subunits, IMMPL1 and IMMPL2. Expressed in all tissues tested except adult liver and lung.

The protein resides in the mitochondrion inner membrane. Catalyzes the removal of transit peptides required for the targeting of proteins from the mitochondrial matrix, across the inner membrane, into the inter-membrane space. Known to process the nuclear encoded protein DIABLO. The protein is Mitochondrial inner membrane protease subunit 2 (IMMP2L) of Homo sapiens (Human).